We begin with the raw amino-acid sequence, 112 residues long: Putative pterin-4-alpha-carbinolamine dehydratase (112 aa).

The protein belongs to the pterin-4-alpha-carbinolamine dehydratase family.

It catalyses the reaction (4aS,6R)-4a-hydroxy-L-erythro-5,6,7,8-tetrahydrobiopterin = (6R)-L-erythro-6,7-dihydrobiopterin + H2O. The sequence is that of Putative pterin-4-alpha-carbinolamine dehydratase from Shewanella amazonensis (strain ATCC BAA-1098 / SB2B).